The chain runs to 89 residues: Small ribosomal subunit protein uS14 (89 aa).

The protein belongs to the universal ribosomal protein uS14 family. In terms of assembly, part of the 30S ribosomal subunit. Contacts proteins S3 and S10.

Its function is as follows. Binds 16S rRNA, required for the assembly of 30S particles and may also be responsible for determining the conformation of the 16S rRNA at the A site. This chain is Small ribosomal subunit protein uS14, found in Chlorobium luteolum (strain DSM 273 / BCRC 81028 / 2530) (Pelodictyon luteolum).